The primary structure comprises 223 residues: Putative PAN domain-containing protein R486 (223 aa).

The first 23 residues, 1–23, serve as a signal peptide directing secretion; that stretch reads MSQTAIIIWIVVIIILLVLGGLG. Residues 39–73 form a disordered region; the sequence is PTPINPPSSITPIQPINPPSSITPIQPSGPPSGGN. Positions 45 to 64 are enriched in low complexity; that stretch reads PSSITPIQPINPPSSITPIQ. 2 PAN domains span residues 80–155 and 159–223; these read CPAY…EDGC and ARYN…KMPH. 2 disulfides stabilise this stretch: Cys-80-Cys-155 and Cys-109-Cys-131. N-linked (GlcNAc...) asparagine; by host glycans are attached at residues Asn-162, Asn-189, and Asn-213. A disulfide bridge connects residues Cys-182 and Cys-204.

It localises to the secreted. The protein resides in the virion. The protein is Putative PAN domain-containing protein R486 of Acanthamoeba polyphaga mimivirus (APMV).